We begin with the raw amino-acid sequence, 397 residues long: Tryptophan synthase beta chain (397 aa).

N6-(pyridoxal phosphate)lysine is present on Lys87.

Belongs to the TrpB family. Tetramer of two alpha and two beta chains. Pyridoxal 5'-phosphate is required as a cofactor.

It catalyses the reaction (1S,2R)-1-C-(indol-3-yl)glycerol 3-phosphate + L-serine = D-glyceraldehyde 3-phosphate + L-tryptophan + H2O. The protein operates within amino-acid biosynthesis; L-tryptophan biosynthesis; L-tryptophan from chorismate: step 5/5. Functionally, the beta subunit is responsible for the synthesis of L-tryptophan from indole and L-serine. This is Tryptophan synthase beta chain from Escherichia coli O127:H6 (strain E2348/69 / EPEC).